The primary structure comprises 394 residues: NADH dehydrogenase [ubiquinone] iron-sulfur protein 2 (394 aa).

A compositionally biased stretch (polar residues) spans methionine 1–glycine 16. The interval methionine 1–alanine 22 is disordered.

The protein belongs to the complex I 49 kDa subunit family. In terms of assembly, complex I is composed of about 45 different subunits. This is a component of the iron-sulfur (IP) fragment of the enzyme.

It is found in the mitochondrion. The enzyme catalyses a ubiquinone + NADH + 5 H(+)(in) = a ubiquinol + NAD(+) + 4 H(+)(out). Its function is as follows. Core subunit of the mitochondrial membrane respiratory chain NADH dehydrogenase (Complex I) that is believed to belong to the minimal assembly required for catalysis. Complex I functions in the transfer of electrons from NADH to the respiratory chain. The immediate electron acceptor for the enzyme is believed to be ubiquinone. Component of the iron-sulfur (IP) fragment of the enzyme. This chain is NADH dehydrogenase [ubiquinone] iron-sulfur protein 2 (NAD7), found in Nicotiana sylvestris (Wood tobacco).